The primary structure comprises 94 residues: Ribonuclease P protein component 1 (94 aa).

The protein belongs to the eukaryotic/archaeal RNase P protein component 1 family. As to quaternary structure, consists of a catalytic RNA component and at least 4-5 protein subunits.

Its subcellular location is the cytoplasm. The enzyme catalyses Endonucleolytic cleavage of RNA, removing 5'-extranucleotides from tRNA precursor.. Functionally, part of ribonuclease P, a protein complex that generates mature tRNA molecules by cleaving their 5'-ends. The chain is Ribonuclease P protein component 1 from Haloarcula marismortui (strain ATCC 43049 / DSM 3752 / JCM 8966 / VKM B-1809) (Halobacterium marismortui).